The following is a 179-amino-acid chain: MTTFYDYYKSKIVKKLMMELNYSSIMQVPKIDKITLNMGVGAASSDKKVLDNAVLDLTAISGQKPLITKARKSVAGFKIRQGYPIGCKVTLRGKRKWDFFERLIVIAIPRIRDFRGLSTNSFDGKGNYSLGIREQIIFPEIDYDKIDRVRGLDITITTTANSDHEARLLLSSFNFPFRK.

The protein belongs to the universal ribosomal protein uL5 family. As to quaternary structure, part of the 50S ribosomal subunit; part of the 5S rRNA/L5/L18/L25 subcomplex. Contacts the 5S rRNA and the P site tRNA. Forms a bridge to the 30S subunit in the 70S ribosome.

This is one of the proteins that bind and probably mediate the attachment of the 5S RNA into the large ribosomal subunit, where it forms part of the central protuberance. In the 70S ribosome it contacts protein S13 of the 30S subunit (bridge B1b), connecting the 2 subunits; this bridge is implicated in subunit movement. Contacts the P site tRNA; the 5S rRNA and some of its associated proteins might help stabilize positioning of ribosome-bound tRNAs. In Buchnera aphidicola subsp. Schizaphis graminum (strain Sg), this protein is Large ribosomal subunit protein uL5.